An 857-amino-acid polypeptide reads, in one-letter code: ATP-dependent RNA helicase DDX24 (857 aa).

A disordered region spans residues 61–179; that stretch reads NPSRLFSSEE…SPKLPKKSKK (119 aa). Phosphoserine is present on residues Ser80 and Ser92. A compositionally biased stretch (basic residues) spans 152–161; it reads PRKKKNKGKK. Ser170 bears the Phosphoserine mark. The Q motif signature appears at 193 to 221; it reads SAWRDLFVPKAVLRALSFLGFSAPTPIQA. The Helicase ATP-binding domain occupies 225-528; the sequence is APAIRDKLDI…RILHKKHVKK (304 aa). 238 to 245 contacts ATP; that stretch reads AETGSGKT. Positions 279 to 363 are disordered; sequence RFGATAHLGS…NEDGEEKFDA (85 aa). Phosphoserine occurs at positions 288 and 296. Basic and acidic residues predominate over residues 290 to 307; that stretch reads CKDRTESGVLPEEARIET. The span at 309-330 shows a compositional bias: polar residues; the sequence is AQPSDSGVQATPETSASASAQT. Positions 345–363 are enriched in basic and acidic residues; that stretch reads LEEKPVPKQNEDGEEKFDA. Lys370 participates in a covalent cross-link: Glycyl lysine isopeptide (Lys-Gly) (interchain with G-Cter in SUMO2). The short motif at 471–474 is the DEAD box element; it reads DEAD. In terms of domain architecture, Helicase C-terminal spans 576 to 723; that stretch reads DLYLYYFLMQ…LFPVQSKYMD (148 aa). Residue Lys624 forms a Glycyl lysine isopeptide (Lys-Gly) (interchain with G-Cter in SUMO2) linkage. The interval 808-857 is disordered; that stretch reads RYPTQSGRPPQPVLASRNIESALSCLSRQKRRRKKPKEPRAPPQPGSSTS. A compositionally biased stretch (polar residues) spans 825 to 834; it reads NIESALSCLS. Residues 835-844 show a composition bias toward basic residues; sequence RQKRRRKKPK. Residues 848–857 show a composition bias toward pro residues; it reads APPQPGSSTS.

Belongs to the DEAD box helicase family. DDX24/MAK5 subfamily. In terms of assembly, interacts with FADD. Interacts with RIPK1; this interaction disrupts RLR signaling activation of IFN-dependent transcription factor IRF7. Interacts with NIP7. Interacts with EP300; this interaction prevents TP53 acetylation mediated by EP300. In terms of processing, ubiquitinated by MDM2 without targeting DDX24 for proteasomal degradation. Instead, polyubiquitylated DDX24 promotes interaction with NIP7, a component of pre-rRNP processing complex, and associates with pre-rRNA molecules and pre-ribosomal particles.

It localises to the cytoplasm. It is found in the nucleus. It carries out the reaction ATP + H2O = ADP + phosphate + H(+). Functionally, ATP-dependent RNA helicase that plays a role in various aspects of RNA metabolism including pre-mRNA splicing and is thereby involved in different biological processes such as cell cycle regulation or innate immunity. Plays an inhibitory role in TP53 transcriptional activity and subsequently in TP53 controlled cell growth arrest and senescence by inhibiting its EP300 mediated acetylation. Negatively regulates cytosolic RNA-mediated innate immune signaling at least in part by affecting RIPK1/IRF7 interactions. Alternatively, possesses antiviral activity by recognizing gammaherpesvirus transcripts in the context of lytic reactivation. Plays an essential role in cell cycle regulation in vascular smooth muscle cells by interacting with and regulating FANCA (Fanconi anemia complementation group A) mRNA. This chain is ATP-dependent RNA helicase DDX24 (Ddx24), found in Mus musculus (Mouse).